A 260-amino-acid polypeptide reads, in one-letter code: Small ribosomal subunit protein uS3 (260 aa).

In terms of domain architecture, KH type-2 spans 39–114 (LRQYIEQKLG…QIRINVVEVQ (76 aa)). Residues 218 to 260 (QEVATPPPSPRDRDRDRGDRDREPRRRQQQRRRQQFEDRSNEG) form a disordered region. 2 stretches are compositionally biased toward basic and acidic residues: residues 227–243 (PRDRDRDRGDRDREPRR) and 251–260 (QQFEDRSNEG).

It belongs to the universal ribosomal protein uS3 family. In terms of assembly, part of the 30S ribosomal subunit. Forms a tight complex with proteins S10 and S14.

Functionally, binds the lower part of the 30S subunit head. Binds mRNA in the 70S ribosome, positioning it for translation. The sequence is that of Small ribosomal subunit protein uS3 from Nostoc sp. (strain PCC 7120 / SAG 25.82 / UTEX 2576).